We begin with the raw amino-acid sequence, 102 residues long: Large ribosomal subunit protein bL21 (102 aa).

This sequence belongs to the bacterial ribosomal protein bL21 family. In terms of assembly, part of the 50S ribosomal subunit. Contacts protein L20.

Its function is as follows. This protein binds to 23S rRNA in the presence of protein L20. This chain is Large ribosomal subunit protein bL21, found in Stenotrophomonas maltophilia (strain K279a).